A 155-amino-acid chain; its full sequence is 3-hydroxyacyl-[acyl-carrier-protein] dehydratase FabZ (155 aa).

Histidine 57 is a catalytic residue.

Belongs to the thioester dehydratase family. FabZ subfamily.

Its subcellular location is the cytoplasm. The enzyme catalyses a (3R)-hydroxyacyl-[ACP] = a (2E)-enoyl-[ACP] + H2O. Involved in unsaturated fatty acids biosynthesis. Catalyzes the dehydration of short chain beta-hydroxyacyl-ACPs and long chain saturated and unsaturated beta-hydroxyacyl-ACPs. This Cereibacter sphaeroides (strain ATCC 17025 / ATH 2.4.3) (Rhodobacter sphaeroides) protein is 3-hydroxyacyl-[acyl-carrier-protein] dehydratase FabZ.